Consider the following 512-residue polypeptide: Aldehyde dehydrogenase B (512 aa).

Active-site residues include glutamate 268 and cysteine 307.

As to quaternary structure, homotetramer.

It catalyses the reaction an aldehyde + NADP(+) + H2O = a carboxylate + NADPH + 2 H(+). The enzyme catalyses acetaldehyde + NADP(+) + H2O = acetate + NADPH + 2 H(+). It carries out the reaction chloroacetaldehyde + NADP(+) + H2O = chloroacetate + NADPH + 2 H(+). The catalysed reaction is propanal + NADP(+) + H2O = propanoate + NADPH + 2 H(+). Magnesium increases enzyme activity with various substrates. Its function is as follows. Catalyzes the NADP(+)-dependent oxidation of diverse aldehydes to their corresponding carboxylic acids, with a preference for acetaldehyde and chloroacetaldehyde. May play a role in detoxifying aldehydes present during stationary phase. Cannot use NAD(+) instead of NADP(+) as the electron acceptor. To a lesser extent is also able to oxidize propionaldehyde (propanal), benzaldehyde, mafosfamide, and 4-hydroperoxycyclophosphamide. Does not use either glyceraldehyde or glycolaldehyde as substrates. This is Aldehyde dehydrogenase B from Escherichia coli (strain K12).